The following is a 615-amino-acid chain: Probable ATP-citrate synthase subunit 1 (615 aa).

Residues 221–241 (LIRF…EVGG) and 272–298 (FKTE…KNQA) contribute to the ATP site. Residue E238 coordinates Mg(2+). H280 acts as the Tele-phosphohistidine intermediate in catalysis. A CoA-binding site is contributed by 299-309 (MREAGIYVPET). S359 carries the post-translational modification Phosphoserine.

Belongs to the succinate/malate CoA ligase alpha subunit family. In terms of assembly, composed of two subunits.

It is found in the cytoplasm. The catalysed reaction is oxaloacetate + acetyl-CoA + ADP + phosphate = citrate + ATP + CoA. Catalyzes the formation of cytosolic acetyl-CoA, which is mainly used for the biosynthesis of fatty acids and sterols. This is Probable ATP-citrate synthase subunit 1 from Schizosaccharomyces pombe (strain 972 / ATCC 24843) (Fission yeast).